A 224-amino-acid polypeptide reads, in one-letter code: Mammalian ependymin-related protein 1 (224 aa).

Positions Met1–Gly37 are cleaved as a signal peptide. 3 disulfide bridges follow: Cys42-Cys172, Cys88-Cys222, and Cys113-Cys210. N-linked (GlcNAc...) asparagine glycans are attached at residues Asn130 and Asn182.

It belongs to the ependymin family. In terms of assembly, homodimer. In terms of processing, N-glycosylated; the glycan contains mannose-6-phosphate moieties. In terms of tissue distribution, detected in brain, small intestine and in soleus, extensor digitorum longus and white gastrocnemius (at protein level). Detected in brain and skeletal muscle, and at lower leavels in heart.

It localises to the lysosome lumen. Its subcellular location is the secreted. Its function is as follows. Binds anionic lipids and gangliosides at acidic pH. This chain is Mammalian ependymin-related protein 1 (Epdr1), found in Mus musculus (Mouse).